A 173-amino-acid chain; its full sequence is Crossover junction endodeoxyribonuclease RuvC (173 aa).

Catalysis depends on residues D8, E67, and D139. The Mg(2+) site is built by D8, E67, and D139.

Belongs to the RuvC family. As to quaternary structure, homodimer which binds Holliday junction (HJ) DNA. The HJ becomes 2-fold symmetrical on binding to RuvC with unstacked arms; it has a different conformation from HJ DNA in complex with RuvA. In the full resolvosome a probable DNA-RuvA(4)-RuvB(12)-RuvC(2) complex forms which resolves the HJ. Mg(2+) is required as a cofactor.

It localises to the cytoplasm. It catalyses the reaction Endonucleolytic cleavage at a junction such as a reciprocal single-stranded crossover between two homologous DNA duplexes (Holliday junction).. Functionally, the RuvA-RuvB-RuvC complex processes Holliday junction (HJ) DNA during genetic recombination and DNA repair. Endonuclease that resolves HJ intermediates. Cleaves cruciform DNA by making single-stranded nicks across the HJ at symmetrical positions within the homologous arms, yielding a 5'-phosphate and a 3'-hydroxyl group; requires a central core of homology in the junction. The consensus cleavage sequence is 5'-(A/T)TT(C/G)-3'. Cleavage occurs on the 3'-side of the TT dinucleotide at the point of strand exchange. HJ branch migration catalyzed by RuvA-RuvB allows RuvC to scan DNA until it finds its consensus sequence, where it cleaves and resolves the cruciform DNA. In Pseudoalteromonas atlantica (strain T6c / ATCC BAA-1087), this protein is Crossover junction endodeoxyribonuclease RuvC.